A 1759-amino-acid polypeptide reads, in one-letter code: Histone-lysine N-methyltransferase ASHH2 (1759 aa).

Basic and acidic residues-rich tracts occupy residues 154–165 (QEKEAPQAKEDE), 197–206 (ETTKHIKPDE), and 215–224 (RFDDGGKEGR). Disordered stretches follow at residues 154–181 (QEKE…GIDT), 197–237 (ETTK…GSSD), 437–482 (CEAG…IESI), 515–556 (SNNI…NRNI), and 738–816 (DELR…VGRI). The span at 462-472 (SARHLRKSSRK) shows a compositional bias: basic residues. Residues 530–556 (RSQGNLNNGEHNRSSHNGNVEGSNRNI) are compositionally biased toward polar residues. Residues 758–775 (KKAKHPKSKSNGTKKGKS) are compositionally biased toward basic residues. Basic and acidic residues-rich tracts occupy residues 776–797 (KFSE…EQRK) and 804–816 (GRDD…VGRI). A CW-type zinc finger spans residues 859-912 (YSTESAWVRCDDCFKWRRIPASVVGSIDESSRWICMNNSDKRFADCSKSQEMSN). Zn(2+) contacts are provided by C868, C871, C893, and C904. One can recognise an AWS domain in the interval 974 to 1024 (DEIMVCHCKPSPDGRLGCGEECLNRMLNIECLQGTCPAGDLCSNQQFQKRK). The 118-residue stretch at 1026-1143 (VKFERFQSGK…KGQELTFDYN (118 aa)) folds into the SET domain. An S-adenosyl-L-methionine-binding site is contributed by Y1142. A Post-SET domain is found at 1151–1167 (AAKKCYCGSSHCRGYIG). 4 disordered regions span residues 1225–1253 (GYKD…PPPL), 1271–1345 (AVQQ…PGVN), 1496–1606 (ERSE…FSSP), and 1727–1759 (KQSV…KLNS). Residues 1232–1241 (DNTQTQSSVS) show a composition bias toward polar residues. Low complexity predominate over residues 1284 to 1293 (STSPTSSSLS). Over residues 1304–1316 (KTTKHGSGEDKKI) the composition is skewed to basic and acidic residues. A compositionally biased stretch (basic residues) spans 1317–1326 (LPRPRPRMKT). Residues 1511-1521 (ASQEPRYDHQS) show a composition bias toward basic and acidic residues. A compositionally biased stretch (polar residues) spans 1530–1556 (SVTSSKAATPETASVSEGYSEPNSGLP). Basic and acidic residues predominate over residues 1566-1577 (RWDQPSKTKEQR). The segment covering 1581–1594 (ILSQQTDETNGNQD) has biased composition (polar residues).

It belongs to the class V-like SAM-binding methyltransferase superfamily. Histone-lysine methyltransferase family. SET2 subfamily. In terms of assembly, interacts with FRI and SUF4, two components of the transcription activator complex FRI-C, and with SWC6, a component of the SWR1 chromatin-remodeling complex. Interacts with BZR2/BES1 and IWS1. Ubiquitous, with higher levels in young tissues, including shoot and root apex. Expressed in ovules, tapetum layer and microspores.

The protein resides in the nucleus. Its subcellular location is the chromosome. The protein localises to the centromere. It carries out the reaction N(6)-methyl-L-lysyl(36)-[histone H3] + S-adenosyl-L-methionine = N(6),N(6)-dimethyl-L-lysyl(36)-[histone H3] + S-adenosyl-L-homocysteine + H(+). The catalysed reaction is N(6),N(6)-dimethyl-L-lysyl(36)-[histone H3] + S-adenosyl-L-methionine = N(6),N(6),N(6)-trimethyl-L-lysyl(36)-[histone H3] + S-adenosyl-L-homocysteine + H(+). In terms of biological role, histone methyltransferase involved in di and tri-methylation of 'Lys-36' of histone H3 (H3K36me2 and H3K36me3). Binds to H3 already mono- or di-methylated on 'Lys-4'(H3K4me1 or H3K4me2), but not to H3K4me3. H3K4me and H3K36me represent specific tags for epigenetic transcriptional activation. Positively regulates FLC transcription to prevent early flowering transition. Required for flowering transition in response to vernalization and for the maintenance of FLC expression in late embryos, but dispensable for the initial reactivation in early embryos during reprogramming. Also seems to modulate several traits including floral organ size, root size and dormancy. Promotes apical dominance. Directly involved in the tri-methylation of 'Lys-36' of histone H3 (H3K36me3) at LAZ5 chromatin to maintain a transcriptionally active state of LAZ5, a TIR-NB-LRR protein involved in innate immunity. Required for brassinosteroid (BR)-induced gene expression and histone H3 trimethylation on 'Lys-36' (H3K36me3) in BR-regulated genes. This is Histone-lysine N-methyltransferase ASHH2 from Arabidopsis thaliana (Mouse-ear cress).